The sequence spans 338 residues: Tryptophan--tRNA ligase (338 aa).

Residues 11-13 and 19-20 contribute to the ATP site; these read QPS and GN. A 'HIGH' region motif is present at residues 12–20; the sequence is PSGELSIGN. Aspartate 135 serves as a coordination point for L-tryptophan. ATP contacts are provided by residues 147–149, valine 189, and 198–202; these read GSD and KMSKS. The short motif at 198–202 is the 'KMSKS' region element; it reads KMSKS.

Belongs to the class-I aminoacyl-tRNA synthetase family. As to quaternary structure, homodimer.

The protein localises to the cytoplasm. The catalysed reaction is tRNA(Trp) + L-tryptophan + ATP = L-tryptophyl-tRNA(Trp) + AMP + diphosphate + H(+). Its function is as follows. Catalyzes the attachment of tryptophan to tRNA(Trp). The polypeptide is Tryptophan--tRNA ligase (Vibrio vulnificus (strain YJ016)).